A 238-amino-acid polypeptide reads, in one-letter code: Endo-chitosanase (238 aa).

Positions 1 to 17 are cleaved as a signal peptide; that stretch reads MRLSEILTVALVTGATA. Asn-83 is a glycosylation site (N-linked (GlcNAc...) asparagine).

It belongs to the glycosyl hydrolase 75 family.

Its subcellular location is the secreted. It carries out the reaction Endohydrolysis of beta-(1-&gt;4)-linkages between D-glucosamine residues in a partly acetylated chitosan.. In terms of biological role, chitosanase catalyzing the endo-type cleavage of chitosan, the deacylated form of chitin. Chitosanase may be crucial in the degradation of the deacetylated portion of chitin in the fungal cell wall. Chitoolisaccharides produced by the hydrolysis of partially N-acetylated chitosan are known to have many biological activities, including antibacterial activity, immune-enhancing effects, and elicitor activity. The chitosans with higher degrees of deacetylation were shown to be the better substrates. Chitodimer, chitotrimer, and chitotetramer are the major products but monoacetyl chitodimer, monoacetyl chitotrimer, and monoacetyl chitotetramer are also produced. The sequence is that of Endo-chitosanase (csn) from Aspergillus fumigatus (Neosartorya fumigata).